The primary structure comprises 329 residues: G-protein coupled bile acid receptor 1 (329 aa).

Over 1-19 (MTSNSTREVPSPVPAGALG) the chain is Extracellular. A glycan (N-linked (GlcNAc...) asparagine) is linked at asparagine 4. Residues 20 to 40 (LSLALASLIVAANLLLAVGIA) form a helical membrane-spanning segment. The Cytoplasmic portion of the chain corresponds to 41–52 (GDRRLRSPPAGC). A helical membrane pass occupies residues 53-73 (FFLSLLLAGLLTGLALPALPV). The Extracellular segment spans residues 74 to 85 (LWSQSRRGYWSC). An intrachain disulfide couples cysteine 85 to cysteine 155. The chain crosses the membrane as a helical span at residues 86-106 (LFLYLAPNFCFLSLLANLLLV). At 107 to 125 (HGERYMAVLRPLRPRGSMR) the chain is on the cytoplasmic side. The chain crosses the membrane as a helical span at residues 126 to 146 (LALLLTWAAPLLFASLPALGW). The Extracellular segment spans residues 147 to 165 (NHWAPGGNCSSQAVFPAPY). A glycan (N-linked (GlcNAc...) asparagine) is linked at asparagine 154. The chain crosses the membrane as a helical span at residues 166–186 (LYLEIYGLLLPAVGAAALLSV). Over 187–230 (RVLVTAHRQLQDIRRLERAVCRGAPSALARALTWRQARAQAGAT) the chain is Cytoplasmic. A helical transmembrane segment spans residues 231–251 (LLFGLCWGPYVATLLLSVLAF). Topologically, residues 252–261 (EQRPPLGPGT) are extracellular. The helical transmembrane segment at 262-282 (LLSLISLGSASAAAVPVAMGL) threads the bilayer. Topologically, residues 283-329 (GDQRYTGPWRVAAQKWLRMLRGRPQSSPGPSTAYHTSSQSSVDLDLN) are cytoplasmic. Residues 304–329 (GRPQSSPGPSTAYHTSSQSSVDLDLN) form a disordered region. Polar residues predominate over residues 306–329 (PQSSPGPSTAYHTSSQSSVDLDLN).

The protein belongs to the G-protein coupled receptor 1 family.

Its subcellular location is the cell membrane. In terms of biological role, receptor for bile acid. Bile acid-binding induces its internalization, activation of extracellular signal-regulated kinase and intracellular cAMP production. May be involved in the suppression of macrophage functions by bile acids. Involved in bile acid promoted GLP1R secretion. This chain is G-protein coupled bile acid receptor 1 (GPBAR1), found in Bos taurus (Bovine).